The following is a 207-amino-acid chain: Large ribosomal subunit protein uL4 (207 aa).

Residues 49–78 (HAVKNRSAVSGGGRKPWRQKGTGRARQGSI) form a disordered region.

This sequence belongs to the universal ribosomal protein uL4 family. As to quaternary structure, part of the 50S ribosomal subunit.

Its function is as follows. One of the primary rRNA binding proteins, this protein initially binds near the 5'-end of the 23S rRNA. It is important during the early stages of 50S assembly. It makes multiple contacts with different domains of the 23S rRNA in the assembled 50S subunit and ribosome. Functionally, forms part of the polypeptide exit tunnel. This Streptococcus pyogenes serotype M1 protein is Large ribosomal subunit protein uL4 (rplD).